Here is a 690-residue protein sequence, read N- to C-terminus: Proprotein convertase subtilisin/kexin type 9 (690 aa).

Positions 1–28 (MGTVRSRRLWWPLPLLLLLLRGPAGARA) are cleaved as a signal peptide. A propeptide spanning residues 29–150 (QEDDDGDYEE…IEEDSYVFAQ (122 aa)) is cleaved from the precursor. The residue at position 36 (tyrosine 36) is a Sulfotyrosine. Serine 45 is subject to Phosphoserine. One can recognise an Inhibitor I9 domain in the interval 75–147 (TYVVVLKEET…VDYIEEDSYV (73 aa)). Residues 153-459 (PWNLERITPA…GWQLFCRTVW (307 aa)) form the Peptidase S8 domain. Catalysis depends on charge relay system residues aspartate 184 and histidine 224. 2 disulfide bridges follow: cysteine 221/cysteine 253 and cysteine 321/cysteine 356. Serine 384 acts as the Charge relay system in catalysis. The tract at residues 448–690 (GAGWQLFCRT…HLAQASQELQ (243 aa)) is C-terminal domain. Intrachain disulfides connect cysteine 455–cysteine 525, cysteine 475–cysteine 524, and cysteine 484–cysteine 507. N-linked (GlcNAc...) asparagine glycosylation occurs at asparagine 531. 6 cysteine pairs are disulfide-bonded: cysteine 532/cysteine 599, cysteine 550/cysteine 598, cysteine 560/cysteine 586, cysteine 606/cysteine 677, cysteine 624/cysteine 676, and cysteine 633/cysteine 652. At serine 686 the chain carries Phosphoserine.

It belongs to the peptidase S8 family. In terms of assembly, monomer. Can self-associate to form dimers and higher multimers which may have increased LDLR degrading activity. The precursor protein but not the mature protein may form multimers. Interacts with APOB, VLDLR, LRP8/APOER2 and BACE1. The full-length immature form (pro-PCSK9) interacts with SCNN1A, SCNN1B and SCNN1G. The pro-PCSK9 form (via C-terminal domain) interacts with LDLR. Interacts (via the C-terminal domain) with ANXA2 (via repeat Annexin 1); the interaction inhibits the degradation of LDLR. It depends on Ca(2+) as a cofactor. Post-translationally, cleavage by furin and PCSK5 generates a truncated inactive protein that is unable to induce LDLR degradation. In terms of processing, undergoes autocatalytic cleavage in the endoplasmic reticulum to release the propeptide from the N-terminus and the cleavage of the propeptide is strictly required for its maturation and activation. The cleaved propeptide however remains associated with the catalytic domain through non-covalent interactions, preventing potential substrates from accessing its active site. As a result, it is secreted from cells as a propeptide-containing, enzymatically inactive protein. Phosphorylation protects the propeptide against proteolysis.

The protein resides in the cytoplasm. It is found in the secreted. Its subcellular location is the endosome. It localises to the lysosome. The protein localises to the cell surface. The protein resides in the endoplasmic reticulum. It is found in the golgi apparatus. Its activity is regulated as follows. Its proteolytic activity is autoinhibited by the non-covalent binding of the propeptide to the catalytic domain. Inhibited by EGTA. Its function is as follows. Crucial player in the regulation of plasma cholesterol homeostasis. Binds to low-density lipid receptor family members: low density lipoprotein receptor (LDLR), very low density lipoprotein receptor (VLDLR), apolipoprotein E receptor (LRP1/APOER) and apolipoprotein receptor 2 (LRP8/APOER2), and promotes their degradation in intracellular acidic compartments. Acts via a non-proteolytic mechanism to enhance the degradation of the hepatic LDLR through a clathrin LDLRAP1/ARH-mediated pathway. May prevent the recycling of LDLR from endosomes to the cell surface or direct it to lysosomes for degradation. Can induce ubiquitination of LDLR leading to its subsequent degradation. Inhibits intracellular degradation of APOB via the autophagosome/lysosome pathway in a LDLR-independent manner. Involved in the disposal of non-acetylated intermediates of BACE1 in the early secretory pathway. Inhibits epithelial Na(+) channel (ENaC)-mediated Na(+) absorption by reducing ENaC surface expression primarily by increasing its proteasomal degradation. Regulates neuronal apoptosis via modulation of LRP8/APOER2 levels and related anti-apoptotic signaling pathways. This chain is Proprotein convertase subtilisin/kexin type 9 (PCSK9), found in Ateles geoffroyi (Black-handed spider monkey).